Here is a 287-residue protein sequence, read N- to C-terminus: Large ribosomal subunit protein uL2 (287 aa).

Positions 221 to 287 are disordered; sequence RGSVMNPCDH…SKRSRGGRDS (67 aa). The segment covering 258–287 has biased composition (basic residues); sequence KTRKRNKPSNRYVLRKRRKTSKRSRGGRDS.

Belongs to the universal ribosomal protein uL2 family. Part of the 50S ribosomal subunit. Forms a bridge to the 30S subunit in the 70S ribosome.

In terms of biological role, one of the primary rRNA binding proteins. Required for association of the 30S and 50S subunits to form the 70S ribosome, for tRNA binding and peptide bond formation. It has been suggested to have peptidyltransferase activity; this is somewhat controversial. Makes several contacts with the 16S rRNA in the 70S ribosome. This is Large ribosomal subunit protein uL2 from Parasynechococcus marenigrum (strain WH8102).